A 205-amino-acid polypeptide reads, in one-letter code: Thymidine kinase (205 aa).

ATP contacts are provided by residues 9–16 (SAMNAGKS) and 87–90 (DESQ). Residue glutamate 88 is the Proton acceptor of the active site. Residues cysteine 145, cysteine 147, cysteine 182, and histidine 185 each coordinate Zn(2+).

This sequence belongs to the thymidine kinase family. In terms of assembly, homotetramer.

It localises to the cytoplasm. It catalyses the reaction thymidine + ATP = dTMP + ADP + H(+). This chain is Thymidine kinase, found in Salmonella choleraesuis (strain SC-B67).